Here is a 176-residue protein sequence, read N- to C-terminus: Probable DNA-directed RNA polymerase subunit delta (176 aa).

The 68-residue stretch at Lys14–Trp81 folds into the HTH HARE-type domain. Positions Leu114 to Ala176 are disordered. 2 stretches are compositionally biased toward acidic residues: residues Glu116–Glu145 and Val153–Ala176.

The protein belongs to the RpoE family. RNAP is composed of a core of 2 alpha, a beta and a beta' subunits. The core is associated with a delta subunit and one of several sigma factors.

Functionally, participates in both the initiation and recycling phases of transcription. In the presence of the delta subunit, RNAP displays an increased specificity of transcription, a decreased affinity for nucleic acids, and an increased efficiency of RNA synthesis because of enhanced recycling. The protein is Probable DNA-directed RNA polymerase subunit delta of Staphylococcus aureus (strain bovine RF122 / ET3-1).